The following is a 423-amino-acid chain: 3-phosphoshikimate 1-carboxyvinyltransferase (423 aa).

Positions 21, 22, and 26 each coordinate 3-phosphoshikimate. Residue lysine 21 coordinates phosphoenolpyruvate. 2 residues coordinate phosphoenolpyruvate: glycine 92 and arginine 120. Residues serine 164, glutamine 166, aspartate 312, and lysine 339 each coordinate 3-phosphoshikimate. Glutamine 166 provides a ligand contact to phosphoenolpyruvate. Catalysis depends on aspartate 312, which acts as the Proton acceptor. Phosphoenolpyruvate-binding residues include arginine 343 and arginine 385.

Belongs to the EPSP synthase family. In terms of assembly, monomer.

The protein resides in the cytoplasm. The catalysed reaction is 3-phosphoshikimate + phosphoenolpyruvate = 5-O-(1-carboxyvinyl)-3-phosphoshikimate + phosphate. Its pathway is metabolic intermediate biosynthesis; chorismate biosynthesis; chorismate from D-erythrose 4-phosphate and phosphoenolpyruvate: step 6/7. Catalyzes the transfer of the enolpyruvyl moiety of phosphoenolpyruvate (PEP) to the 5-hydroxyl of shikimate-3-phosphate (S3P) to produce enolpyruvyl shikimate-3-phosphate and inorganic phosphate. The protein is 3-phosphoshikimate 1-carboxyvinyltransferase of Thermoanaerobacter pseudethanolicus (strain ATCC 33223 / 39E) (Clostridium thermohydrosulfuricum).